Reading from the N-terminus, the 349-residue chain is Microbial Terpene synthase-like protein 1 (349 aa).

The Mg(2+) site is built by aspartate 98, aspartate 102, asparagine 243, and serine 247. The short motif at 98 to 102 is the DDXXD motif element; that stretch reads DDILD.

The protein belongs to the terpene synthase family. Mg(2+) is required as a cofactor.

It functions in the pathway secondary metabolite biosynthesis; terpenoid biosynthesis. In terms of biological role, sesquiterpene synthase converting farnesyl diphosphate to six sesquiterpenes, with beta-elemene, delta-cadinene and an unidentified oxygenated sesquiterpene as the major products. Has no diterpene synthase activity. The sequence is that of Microbial Terpene synthase-like protein 1 from Selaginella moellendorffii (Spikemoss).